A 458-amino-acid polypeptide reads, in one-letter code: DNA repair protein RadA (458 aa).

The C4-type zinc-finger motif lies at 10-27; that stretch reads CQSCGYESPKWMGKCPGC. 98–105 contributes to the ATP binding site; that stretch reads GDPGIGKS. The RadA KNRFG motif motif lies at 255–259; sequence KNRFG. A lon-protease-like region spans residues 354 to 458; the sequence is DAYLKVAGGV…AEALRTSLGG (105 aa).

The protein belongs to the RecA family. RadA subfamily. Interacts with DisA.

In terms of biological role, DNA-dependent ATPase involved in processing of recombination intermediates, plays a role in repairing DNA breaks. Stimulates the branch migration of RecA-mediated strand transfer reactions, allowing the 3' invading strand to extend heteroduplex DNA faster. Binds ssDNA in the presence of ADP but not other nucleotides, has ATPase activity that is stimulated by ssDNA and various branched DNA structures, but inhibited by SSB. Does not have RecA's homology-searching function. Plays a role in DNA repair. Might stabilize or process Holliday junction intermediates. May work with DisA following methyl methanesulfonate (MMS) but not H(2)O(2) damage; DisA is a DNA integrity scanning protein with c-di-AMP synthase activity. The polypeptide is DNA repair protein RadA (Bacillus subtilis (strain 168)).